The primary structure comprises 148 residues: Lysozyme C-2 (148 aa).

Positions 1–18 (MKTLLTLGLLLLSVTAQA) are cleaved as a signal peptide. Residues 19-148 (KVYERCEFAR…LSQYIRNCGV (130 aa)) form the C-type lysozyme domain. Cystine bridges form between Cys-24–Cys-146, Cys-48–Cys-134, Cys-83–Cys-99, and Cys-95–Cys-113. Active-site residues include Glu-53 and Asp-71.

It belongs to the glycosyl hydrolase 22 family. Monomer. As to expression, expressed weakly in myeloblasts, moderately in immature macrophages, and strongly in both mature macrophages and macrophage-rich tissues.

Its subcellular location is the secreted. The enzyme catalyses Hydrolysis of (1-&gt;4)-beta-linkages between N-acetylmuramic acid and N-acetyl-D-glucosamine residues in a peptidoglycan and between N-acetyl-D-glucosamine residues in chitodextrins.. In terms of biological role, lysozymes have primarily a bacteriolytic function; those in tissues and body fluids are associated with the monocyte-macrophage system and enhance the activity of immunoagents. Lyz2 is active against a range of Gram-positive and Gram-negative bacteria. More effective than Lyz1 in killing Gram-negative bacteria. Lyz1 and Lyz2 are equally effective in killing Gram-positive bacteria. The chain is Lysozyme C-2 (Lyz2) from Mus musculus (Mouse).